Reading from the N-terminus, the 75-residue chain is MSKLKITYRKSAIGYSHDQKATIRSLGLRRLNSVVVHDDTPTIRGMIFKVRHLVSVEELPDRDAPADHPGDDMKR.

The protein belongs to the universal ribosomal protein uL30 family. In terms of assembly, part of the 50S ribosomal subunit.

This chain is Large ribosomal subunit protein uL30, found in Roseiflexus castenholzii (strain DSM 13941 / HLO8).